Consider the following 204-residue polypeptide: Probable GTP-binding protein EngB (204 aa).

Residues 27–201 (SGIEIAFAGR…SEKLDQWFSP (175 aa)) enclose the EngB-type G domain. GTP-binding positions include 35 to 42 (GRSNAGKS), 62 to 66 (GRTQL), 80 to 83 (DLPG), 147 to 150 (TKAD), and 180 to 182 (FSA). 2 residues coordinate Mg(2+): Ser-42 and Thr-64.

Belongs to the TRAFAC class TrmE-Era-EngA-EngB-Septin-like GTPase superfamily. EngB GTPase family. It depends on Mg(2+) as a cofactor.

Necessary for normal cell division and for the maintenance of normal septation. In Histophilus somni (strain 129Pt) (Haemophilus somnus), this protein is Probable GTP-binding protein EngB.